The primary structure comprises 551 residues: Urocanate hydratase (551 aa).

NAD(+) contacts are provided by residues 48-49, Gln126, 172-174, Glu192, Arg197, 238-239, 259-263, 269-270, and Tyr318; these read GG, GMG, NA, QTSAH, and YI. Cys406 is a catalytic residue. Gly488 lines the NAD(+) pocket.

This sequence belongs to the urocanase family. The cofactor is NAD(+).

Its subcellular location is the cytoplasm. It carries out the reaction 4-imidazolone-5-propanoate = trans-urocanate + H2O. It functions in the pathway amino-acid degradation; L-histidine degradation into L-glutamate; N-formimidoyl-L-glutamate from L-histidine: step 2/3. In terms of biological role, catalyzes the conversion of urocanate to 4-imidazolone-5-propionate. The chain is Urocanate hydratase from Symbiobacterium thermophilum (strain DSM 24528 / JCM 14929 / IAM 14863 / T).